Here is a 423-residue protein sequence, read N- to C-terminus: UDP-N-acetylglucosamine 1-carboxyvinyltransferase 2 (423 aa).

23 to 24 (KN) is a binding site for phosphoenolpyruvate. Arg93 contacts UDP-N-acetyl-alpha-D-glucosamine. Cys117 serves as the catalytic Proton donor. Cys117 carries the post-translational modification 2-(S-cysteinyl)pyruvic acid O-phosphothioketal. UDP-N-acetyl-alpha-D-glucosamine is bound by residues 122–126 (RPIDQ), Asp305, and Ile327.

This sequence belongs to the EPSP synthase family. MurA subfamily.

It localises to the cytoplasm. It catalyses the reaction phosphoenolpyruvate + UDP-N-acetyl-alpha-D-glucosamine = UDP-N-acetyl-3-O-(1-carboxyvinyl)-alpha-D-glucosamine + phosphate. Its pathway is cell wall biogenesis; peptidoglycan biosynthesis. Functionally, cell wall formation. Adds enolpyruvyl to UDP-N-acetylglucosamine. The sequence is that of UDP-N-acetylglucosamine 1-carboxyvinyltransferase 2 from Listeria innocua serovar 6a (strain ATCC BAA-680 / CLIP 11262).